We begin with the raw amino-acid sequence, 232 residues long: Large ribosomal subunit protein uL1 (232 aa).

The protein belongs to the universal ribosomal protein uL1 family. As to quaternary structure, part of the 50S ribosomal subunit.

In terms of biological role, binds directly to 23S rRNA. The L1 stalk is quite mobile in the ribosome, and is involved in E site tRNA release. Its function is as follows. Protein L1 is also a translational repressor protein, it controls the translation of the L11 operon by binding to its mRNA. The polypeptide is Large ribosomal subunit protein uL1 (Chlamydia abortus (strain DSM 27085 / S26/3) (Chlamydophila abortus)).